A 494-amino-acid polypeptide reads, in one-letter code: Flap endonuclease 1 (494 aa).

The tract at residues 1 to 106 (MGIKGLIPFL…KTLEKRRQQR (106 aa)) is N-domain. Position 34 (D34) interacts with Mg(2+). R47 and R72 together coordinate DNA. 5 residues coordinate Mg(2+): D88, E160, E162, D181, and D183. The tract at residues 124–253 (SVKKLVGRTV…KTAYSLVKKY (130 aa)) is I-domain. E160 serves as a coordination point for DNA. Residues G231 and D233 each coordinate DNA. Residue D233 participates in Mg(2+) binding. Positions 330 to 338 (IQTSLLSFL) are interaction with PCNA. Disordered regions lie at residues 341-382 (PQHN…ESST) and 395-426 (LFCE…ENET). Basic and acidic residues predominate over residues 408 to 426 (DRGRVDKNEDLFKKSENET).

Belongs to the XPG/RAD2 endonuclease family. FEN1 subfamily. Interacts with PCNA. Three molecules of FEN1 bind to one PCNA trimer with each molecule binding to one PCNA monomer. PCNA stimulates the nuclease activity without altering cleavage specificity. The cofactor is Mg(2+). Post-translationally, phosphorylated. Phosphorylation upon DNA damage induces relocalization to the nuclear plasma.

Its subcellular location is the nucleus. The protein resides in the nucleolus. It localises to the nucleoplasm. It is found in the mitochondrion. Structure-specific nuclease with 5'-flap endonuclease and 5'-3' exonuclease activities involved in DNA replication and repair. During DNA replication, cleaves the 5'-overhanging flap structure that is generated by displacement synthesis when DNA polymerase encounters the 5'-end of a downstream Okazaki fragment. It enters the flap from the 5'-end and then tracks to cleave the flap base, leaving a nick for ligation. Also involved in the long patch base excision repair (LP-BER) pathway, by cleaving within the apurinic/apyrimidinic (AP) site-terminated flap. Acts as a genome stabilization factor that prevents flaps from equilibrating into structures that lead to duplications and deletions. Also possesses 5'-3' exonuclease activity on nicked or gapped double-stranded DNA, and exhibits RNase H activity. Also involved in replication and repair of rDNA and in repairing mitochondrial DNA. This Theileria parva (East coast fever infection agent) protein is Flap endonuclease 1.